Consider the following 479-residue polypeptide: Anaerobic nitric oxide reductase flavorubredoxin (479 aa).

The tract at residues 30 to 210 is zinc metallo-hydrolase; that stretch reads LRGSSYNSYL…PFSRLVTPKI (181 aa). Fe cation is bound by residues H79, E81, D83, H147, D166, and H227. The Flavodoxin-like domain occupies 254-393; sequence ITIFYDTMSN…LCRQHGRDIA (140 aa). FMN is bound by residues 260–264 and 342–369; these read TMSNN and AFGSHGWSGGAVDRLSTRLQDAGFEMSL. The region spanning 423–474 is the Rubredoxin-like domain; it reads GPKMQCSVCQWIYDPAQGEPLQDVAPGTPWSDVPDNFLCPECSLGKDVFDVL. Fe cation contacts are provided by C428, C431, C461, and C464.

In the N-terminal section; belongs to the zinc metallo-hydrolase group 3 family. In terms of assembly, homotetramer. Requires Fe cation as cofactor. It depends on FMN as a cofactor.

The protein localises to the cytoplasm. The protein operates within nitrogen metabolism; nitric oxide reduction. Functionally, anaerobic nitric oxide reductase; uses NADH to detoxify nitric oxide (NO), protecting several 4Fe-4S NO-sensitive enzymes. Has at least 2 reductase partners, only one of which (NorW, flavorubredoxin reductase) has been identified. NO probably binds to the di-iron center; electrons enter from the NorW at rubredoxin and are transferred sequentially to the FMN center and the di-iron center. Also able to function as an aerobic oxygen reductase. The sequence is that of Anaerobic nitric oxide reductase flavorubredoxin from Salmonella choleraesuis (strain SC-B67).